Reading from the N-terminus, the 2671-residue chain is Stalled ribosome sensor GCN1 (2671 aa).

A2 bears the N-acetylalanine mark. 10 HEAT repeats span residues N140–G178, E257–S293, Q294–D331, I385–K423, L425–L459, L460–D503, N560–G597, K599–A636, D697–V732, and L733–A770. S729 carries the phosphoserine modification. S786 is modified (phosphoserine). A coiled-coil region spans residues Q804–D863. 36 HEAT repeats span residues V879–L925, S979–L1016, L1035–G1072, F1078–A1115, D1155–R1192, Y1210–S1250, S1251–K1289, E1290–K1332, P1335–E1372, A1374–I1410, L1413–K1451, P1455–A1492, H1493–K1530, S1534–N1571, E1573–D1609, P1611–Q1648, P1653–E1690, C1692–V1729, K1731–D1769, P1773–E1810, A1812–G1848, E1921–E1958, K1959–R1996, Y2001–H2038, Q2039–V2076, P2078–T2106, R2107–D2146, T2147–A2184, S2188–A2225, K2259–A2296, P2301–G2338, I2339–K2380, D2382–A2417, V2422–E2459, Q2546–P2583, and Q2588–G2625. An RWDBD region region spans residues G2260 to L2408. S2276 bears the Phosphoserine mark. The HEAT 47; degenerate repeat unit spans residues E2627 to S2661.

The protein belongs to the GCN1 family. As to quaternary structure, interacts with EIF2AK4/GCN2; this interaction stimulates the EIF2AK4/GCN2 kinase activity and is impaired by IMPACT upon a variety of stress conditions, such as amino acid depletion, UV-C irradiation, proteasome inhibitor treatment and glucose deprivation. Interacts with IMPACT; this prevents the interaction of GCN1 with EIF2AK4/GCN2 and inhibits EIF2AK4/GCN2 kinase activity. Interacts with RNF14; interaction takes place following ribosome stalling and promotes recruitment of RNF14. In terms of tissue distribution, ubiquitously expressed. Expressed in skeletal muscules, ovary and testis.

The protein localises to the cytoplasm. Its function is as follows. Ribosome collision sensor that plays a key role in the RNF14-RNF25 translation quality control pathway, a pathway that takes place when a ribosome has stalled during translation, and which promotes ubiquitination and degradation of translation factors on stalled ribosomes. Directly binds to the ribosome and acts as a sentinel for colliding ribosomes: activated following ribosome stalling and promotes recruitment of RNF14, which directly ubiquitinates EEF1A1/eEF1A, leading to its degradation. In addition to EEF1A1/eEF1A, the RNF14-RNF25 translation quality control pathway mediates degradation of ETF1/eRF1 and ubiquitination of ribosomal protein. GCN1 also acts as a positive activator of the integrated stress response (ISR) by mediating activation of EIF2AK4/GCN2 in response to amino acid starvation. Interaction with EIF2AK4/GCN2 on translating ribosomes stimulates EIF2AK4/GCN2 kinase activity, leading to phosphorylation of eukaryotic translation initiation factor 2 (eIF-2-alpha/EIF2S1). EIF2S1/eIF-2-alpha phosphorylation converts EIF2S1/eIF-2-alpha into a global protein synthesis inhibitor, leading to a global attenuation of cap-dependent translation, and thus to a reduced overall utilization of amino acids, while concomitantly initiating the preferential translation of ISR-specific mRNAs, such as the transcriptional activator ATF4, and hence allowing ATF4-mediated reprogramming of amino acid biosynthetic gene expression to alleviate nutrient depletion. The chain is Stalled ribosome sensor GCN1 from Homo sapiens (Human).